Reading from the N-terminus, the 146-residue chain is UPF0178 protein BcerKBAB4_2842 (146 aa).

This sequence belongs to the UPF0178 family.

In Bacillus mycoides (strain KBAB4) (Bacillus weihenstephanensis), this protein is UPF0178 protein BcerKBAB4_2842.